Here is a 131-residue protein sequence, read N- to C-terminus: Large ribosomal subunit protein bL17 (131 aa).

Belongs to the bacterial ribosomal protein bL17 family. As to quaternary structure, part of the 50S ribosomal subunit. Contacts protein L32.

This is Large ribosomal subunit protein bL17 from Bordetella petrii (strain ATCC BAA-461 / DSM 12804 / CCUG 43448).